The following is a 118-amino-acid chain: Large ribosomal subunit protein bL17 (118 aa).

The protein belongs to the bacterial ribosomal protein bL17 family. In terms of assembly, part of the 50S ribosomal subunit. Contacts protein L32.

This Thermus thermophilus (strain ATCC BAA-163 / DSM 7039 / HB27) protein is Large ribosomal subunit protein bL17.